A 122-amino-acid chain; its full sequence is Large ribosomal subunit protein bL12 (122 aa).

It belongs to the bacterial ribosomal protein bL12 family. In terms of assembly, homodimer. Part of the ribosomal stalk of the 50S ribosomal subunit. Forms a multimeric L10(L12)X complex, where L10 forms an elongated spine to which 2 to 4 L12 dimers bind in a sequential fashion. Binds GTP-bound translation factors.

In terms of biological role, forms part of the ribosomal stalk which helps the ribosome interact with GTP-bound translation factors. Is thus essential for accurate translation. This Yersinia enterocolitica serotype O:8 / biotype 1B (strain NCTC 13174 / 8081) protein is Large ribosomal subunit protein bL12.